Here is a 305-residue protein sequence, read N- to C-terminus: Guanine nucleotide-binding protein subunit beta (305 aa).

WD repeat units follow at residues N19–D49, A61–D91, G104–D133, G145–D176, G188–D218, P231–D260, and G272–S302.

The protein belongs to the WD repeat G protein beta family. As to quaternary structure, g proteins are composed of 3 units, alpha, beta and gamma. Binding of the beta-gamma subunit complex (git5-git11) to the alpha subunit (gpa2) facilitates interaction with GPCR git3.

It is found in the cell membrane. It localises to the cytoplasm. The protein localises to the nucleus. Its function is as follows. Beta subunit of the heterotrimeric guanine nucleotide-binding protein (G protein) involved in glucose-induced cAMP signaling. The beta-gamma subunits (git5-git11) promote binding of the alpha subunit gpa2 to GPCR git3, which senses extracellular glucose, to activate cAMP-PKA signaling and repress sexual development and gluconeogenesis. This chain is Guanine nucleotide-binding protein subunit beta (git5), found in Schizosaccharomyces pombe (strain 972 / ATCC 24843) (Fission yeast).